We begin with the raw amino-acid sequence, 368 residues long: Isopentenyl-diphosphate delta-isomerase (368 aa).

7-8 is a substrate binding site; the sequence is RK. FMN is bound by residues Thr-65, 66 to 68, Ser-96, and Asn-125; that span reads GMT. Position 96-98 (96-98) interacts with substrate; the sequence is SQR. Residue Gln-160 participates in substrate binding. Position 161 (Glu-161) interacts with Mg(2+). FMN contacts are provided by residues Lys-193, Ser-218, Thr-223, 275 to 277, and 296 to 297; these read GIR and AL.

The protein belongs to the IPP isomerase type 2 family. As to quaternary structure, homooctamer. Dimer of tetramers. It depends on FMN as a cofactor. The cofactor is NADPH. Mg(2+) serves as cofactor.

It localises to the cytoplasm. The enzyme catalyses isopentenyl diphosphate = dimethylallyl diphosphate. Its function is as follows. Involved in the biosynthesis of isoprenoids. Catalyzes the 1,3-allylic rearrangement of the homoallylic substrate isopentenyl (IPP) to its allylic isomer, dimethylallyl diphosphate (DMAPP). The protein is Isopentenyl-diphosphate delta-isomerase of Saccharolobus islandicus (strain M.16.27) (Sulfolobus islandicus).